A 487-amino-acid polypeptide reads, in one-letter code: (S)-N-methylcoclaurine 3'-hydroxylase isozyme 1 (487 aa).

Residues 4–24 (TVALIAVIISSILYLLFGGSG) traverse the membrane as a helical segment. Cys-429 is a binding site for heme.

This sequence belongs to the cytochrome P450 family. The cofactor is heme.

The protein localises to the endoplasmic reticulum membrane. The protein resides in the microsome membrane. The enzyme catalyses (S)-N-methylcoclaurine + reduced [NADPH--hemoprotein reductase] + O2 = (S)-3'-hydroxy-N-methylcoclaurine + oxidized [NADPH--hemoprotein reductase] + H2O + H(+). The protein operates within alkaloid biosynthesis; (S)-reticuline biosynthesis; (S)-reticuline from (S)-norcoclaurine: step 3/4. 3'-hydroxylation of (S)-N-methylcoclaurine. This is (S)-N-methylcoclaurine 3'-hydroxylase isozyme 1 (CYP80B1) from Eschscholzia californica (California poppy).